The primary structure comprises 536 residues: Multifunctional cytochrome P450 monooxygenase af510 (536 aa).

The chain crosses the membrane as a helical span at residues 4–24 (ELSTLQLSCVAFVAFMAVLVF). N-linked (GlcNAc...) asparagine glycans are attached at residues Asn210 and Asn293. Residue Cys448 participates in heme binding.

The protein belongs to the cytochrome P450 family. Heme serves as cofactor.

The protein localises to the membrane. The enzyme catalyses (+)-exo-beta-bergamotene + 2 reduced [NADPH--hemoprotein reductase] + 3 O2 = 5-dehydro-6-demethoxyfumagillol + 2 oxidized [NADPH--hemoprotein reductase] + 3 H2O + 2 H(+). Its pathway is secondary metabolite biosynthesis; terpenoid biosynthesis. Multifunctional cytochrome P450 monooxygenase; part of the gene cluster that mediates the biosynthesis of fumagillin, a meroterpenoid that has numerous biological activities including irreversible inhibition of human type 2 methionine aminopeptidase (METAP2). Within the pathway, the multifunctional cytochrome P450 monooxygenase af510 acts as a 2,4,6-trichlorophenol monooxygenase that first performs the C-H hydroxylation at the bridgehead C5 position to yield 5R-hydroxyl-beta-trans-bergamotene. Subsequently, a four electron oxidation initiated at C-9 coupled to cleavage of the cyclobutane C5-C8 bond of the bicyclo[3.1.1] core yields the epoxyketone intermediate 5-keto-cordycol. An additional epoxidation reaction also catalyzed by af510 then furnishes the characteristic bisepoxide ketone 5-keto-demethoxyfumagillol. The pathway begins with the conversion of farnesyl pyrophosphate (FPP) to beta-trans-bergamotene by the membrane-bound beta-trans-bergamotene synthase af520. The multifunctional cytochrome P450 monooxygenase af510 then converts beta-trans-bergamotene into 5-keto-demethoxyfumagillol via several oxydation steps. 5-keto-demethoxyfumagillol is then subjected to successive C-6 hydroxylation and O-methylation by the dioxygenase af480 and O-methyltransferase af390-400, respectively, to yield 5-keto-fumagillol, which is then stereoselectively reduced by the keto-reductase af490 to 5R-hydroxy-seco-sesquiterpene. The next step is the polyketide transferase af380-catalyzed transfer of a dodecapentaenoyl group synthesized by the polyketide synthase af370 onto 5R-hydroxy-seco-sesquiterpene which leads to the production of prefumagillin. Finally, oxidative cleavage by the monooxygenase af470 converts prefumagillin to fumagillin. The protein is Multifunctional cytochrome P450 monooxygenase af510 of Aspergillus fumigatus (strain ATCC MYA-4609 / CBS 101355 / FGSC A1100 / Af293) (Neosartorya fumigata).